Consider the following 198-residue polypeptide: Probable GTP-binding protein EngB (198 aa).

Residues 22–195 form the EngB-type G domain; the sequence is DLPEIALAGR…WKAIHKFTKT (174 aa). GTP contacts are provided by residues 30–37, 57–61, 75–78, 142–145, and 174–176; these read GRSNVGKS, GKTQT, DVPG, TKAD, and FSS. 2 residues coordinate Mg(2+): serine 37 and threonine 59.

This sequence belongs to the TRAFAC class TrmE-Era-EngA-EngB-Septin-like GTPase superfamily. EngB GTPase family. The cofactor is Mg(2+).

Necessary for normal cell division and for the maintenance of normal septation. The sequence is that of Probable GTP-binding protein EngB from Bacillus cereus (strain B4264).